Reading from the N-terminus, the 699-residue chain is Glycine--tRNA ligase beta subunit (699 aa).

Belongs to the class-II aminoacyl-tRNA synthetase family. Tetramer of two alpha and two beta subunits.

It is found in the cytoplasm. It carries out the reaction tRNA(Gly) + glycine + ATP = glycyl-tRNA(Gly) + AMP + diphosphate. This Bradyrhizobium diazoefficiens (strain JCM 10833 / BCRC 13528 / IAM 13628 / NBRC 14792 / USDA 110) protein is Glycine--tRNA ligase beta subunit.